Here is a 293-residue protein sequence, read N- to C-terminus: Ribosomal protein L11 methyltransferase (293 aa).

Positions 145, 166, 188, and 230 each coordinate S-adenosyl-L-methionine.

This sequence belongs to the methyltransferase superfamily. PrmA family.

The protein localises to the cytoplasm. The catalysed reaction is L-lysyl-[protein] + 3 S-adenosyl-L-methionine = N(6),N(6),N(6)-trimethyl-L-lysyl-[protein] + 3 S-adenosyl-L-homocysteine + 3 H(+). Methylates ribosomal protein L11. In Escherichia coli O7:K1 (strain IAI39 / ExPEC), this protein is Ribosomal protein L11 methyltransferase.